The following is a 437-amino-acid chain: Adenylosuccinate synthetase, organellar chromatophore (437 aa).

GTP is bound by residues 12 to 18 and 40 to 42; these read GDEGKGK and GHT. Asp13 (proton acceptor) is an active-site residue. Positions 13 and 40 each coordinate Mg(2+). IMP-binding positions include 13 to 16, 38 to 41, Thr128, Arg142, Gln223, Thr238, and Arg302; these read DEGK and NAGH. Catalysis depends on His41, which acts as the Proton donor. Residue 298–304 participates in substrate binding; sequence TTTGRRR. GTP-binding positions include Arg304 and 330–332; that span reads KLD.

It belongs to the adenylosuccinate synthetase family. As to quaternary structure, homodimer. The cofactor is Mg(2+).

The protein resides in the plastid. The protein localises to the organellar chromatophore. It carries out the reaction IMP + L-aspartate + GTP = N(6)-(1,2-dicarboxyethyl)-AMP + GDP + phosphate + 2 H(+). It functions in the pathway purine metabolism; AMP biosynthesis via de novo pathway; AMP from IMP: step 1/2. Its function is as follows. Plays an important role in the de novo pathway and in the salvage pathway of purine nucleotide biosynthesis. Catalyzes the first committed step in the biosynthesis of AMP from IMP. This chain is Adenylosuccinate synthetase, organellar chromatophore, found in Paulinella chromatophora.